Here is a 259-residue protein sequence, read N- to C-terminus: Protein unc-50 homolog (259 aa).

Positions 1 to 15 (MLPTSSPQIHRNGSL) are enriched in polar residues. The segment at 1 to 22 (MLPTSSPQIHRNGSLSERDAAR) is disordered. The Cytoplasmic segment spans residues 1–80 (MLPTSSPQIH…TKDQWARDDP (80 aa)). Residues 81–101 (AFLVLLSIWLCVSTVGFGLVL) form a helical membrane-spanning segment. Residues 102-110 (DMGFVETLT) are Lumenal-facing. A helical membrane pass occupies residues 111–131 (LLLWVVFIDCIGVGLLISTLM). The Cytoplasmic portion of the chain corresponds to 132–162 (WFVTNKYLMKHPNRDYDVEWGYAFDVHLNAF). Residues 163-183 (YPLLVILHFLQLFFINHVVVI) traverse the membrane as a helical segment. Residues 184 to 198 (SSDWFLGYFVGNTMW) are Lumenal-facing. A helical membrane pass occupies residues 199 to 219 (LIAIGYYVYITFLGYSALPFL). The Cytoplasmic portion of the chain corresponds to 220-222 (KNT). A helical transmembrane segment spans residues 223–243 (VVLLYPFALLGLLYVLSISLG). At 244 to 259 (WNFTKGLCWFYKHRVQ) the chain is on the lumenal side.

It belongs to the unc-50 family.

The protein resides in the nucleus inner membrane. It is found in the golgi apparatus membrane. In terms of biological role, involved in the cell surface expression of neuronal nicotinic receptors. Binds RNA. The protein is Protein unc-50 homolog (unc50) of Danio rerio (Zebrafish).